Consider the following 369-residue polypeptide: Probable N-acetyltransferase 16 (369 aa).

The disordered stretch occupies residues 1-49; the sequence is MKLEASCGTATSEVPKPEKKTARDAEPSSETRPQEVEAEPRSGSGPEAE. Over residues 15 to 26 the composition is skewed to basic and acidic residues; that stretch reads PKPEKKTARDAE. Positions 53-188 constitute an N-acetyltransferase domain; that stretch reads LDFVVATERE…QGILLVRFNA (136 aa).

Its function is as follows. Probable N-acetyltransferase. Shows only trace activity toward L-His and no N-acetyltransferase activity toward other amino acids. The physiological substrate of this enzyme is unknown. In Homo sapiens (Human), this protein is Probable N-acetyltransferase 16 (NAT16).